A 551-amino-acid chain; its full sequence is TRAF3-interacting JNK-activating modulator (551 aa).

Residues 1-526 (MISPDPRPSP…QLPPRRQCGR (526 aa)) are Cytoplasmic-facing. 2 disordered regions span residues 73–95 (LEEK…RPGQ) and 140–178 (DHLS…IKND). Coiled coils occupy residues 240–436 (DKLK…LLTK) and 464–506 (WDLR…RKLQ). The chain crosses the membrane as a helical; Anchor for type IV membrane protein span at residues 527 to 544 (WLPVLMVVIAAALAVFLA). The Extracellular segment spans residues 545 to 551 (NKDNLMI).

Interacts (via its coiled-coil domain) with TRAF3 (via isoleucine zipper). Interacts with MAP2K1. Interacts with PPP2CA; this interaction targets PPP2CA to the lysosomes. Interacts with TLR4. Interacts with MAVS. Interacts with TBK1.

It localises to the cell membrane. The protein localises to the golgi apparatus membrane. Its subcellular location is the lysosome membrane. It is found in the mitochondrion outer membrane. Its function is as follows. Adapter protein that plays essential roles in both innate and adaptive immunity. Plays a crucial role in the regulation of thymocyte development. Mechanistically, mediates TCR-stimulated activation through recruiting MAP2K1/MEK1 to the Golgi and, thereby, facilitating the interaction of MAP2K1/MEK1 with its activator BRAF. Also plays an essential role in regulatory T-cell stability and function by recruiting the serine-threonine phosphatase catalytic subunit (PPP2CA) to the lysosome, thereby facilitating the interaction of PP2Ac with the mTORC1 component RPTOR and restricting glycolytic metabolism. Positively regulates TLR4 signaling activity in macrophage-mediated inflammation by acting as a molecular clamp to facilitate LPS-induced translocation of TLR4 to lipid rafts. In response to viral infection, facilitates the recruitment of TRAF3 to MAVS within mitochondria leading to IRF3 activation and interferon production. However, participates in the maintenance of immune homeostasis and the prevention of overzealous innate immunity by promoting 'Lys-48'-dependent ubiquitination of TBK1. This chain is TRAF3-interacting JNK-activating modulator (TRAF3IP3), found in Homo sapiens (Human).